The primary structure comprises 530 residues: Chaperone Ric-8A (530 aa).

A Phosphoserine modification is found at S435. 2 positions are modified to phosphothreonine: T440 and T442. Phosphoserine occurs at positions 501, 522, 523, and 527.

It belongs to the synembryn family. Interacts with GDP-bound G alpha proteins GNAI1, GNAO1 and GNAQ, and with GNA13 with lower affinity. Does not interact with G-alpha proteins when they are in complex with subunits beta and gamma. Interacts (via C-terminus) with RGS14; the interaction stimulates the dissociation of the complex between RGS14 and the active GTP-bound form of GNAI1. Interacts with NCS1; interaction is favored in the absence of Ca(2+) and myristoylation of NCS1 is not required. As to expression, expressed in neurons and neurites of the CA1 and CA2 subregions of the hippocampus (at protein level). In adult brain, it is expressed in the neocortex, hippocampus and cerebellum as well as in the pineal gland and ependymal layer.

The protein localises to the cytoplasm. The protein resides in the cell cortex. Chaperone that specifically binds and folds nascent G alpha proteins prior to G protein heterotrimer formation, promoting their stability and activity: folds GNAI1, GNAO1, GNA13 and GNAQ. Does not fold G(s) G-alpha proteins GNAS nor GNAL. Also acts as a guanine nucleotide exchange factor (GEF) for G alpha proteins by stimulating exchange of bound GDP for free GTP. Involved in regulation of microtubule pulling forces during mitotic movement of chromosomes by stimulating G(i)-alpha protein (GNAI1), possibly leading to release G(i)-alpha-GTP and NuMA proteins from the NuMA-GPSM2-G(i)-alpha-GDP complex. Also acts as an activator for G(q)-alpha (GNAQ) protein by enhancing the G(q)-coupled receptor-mediated ERK activation. In Mus musculus (Mouse), this protein is Chaperone Ric-8A.